Consider the following 462-residue polypeptide: A-type ATP synthase subunit B (462 aa).

Belongs to the ATPase alpha/beta chains family. Has multiple subunits with at least A(3), B(3), C, D, E, F, H, I and proteolipid K(x).

It localises to the cell membrane. Its function is as follows. Component of the A-type ATP synthase that produces ATP from ADP in the presence of a proton gradient across the membrane. The B chain is a regulatory subunit. The polypeptide is A-type ATP synthase subunit B (Methanococcus vannielii (strain ATCC 35089 / DSM 1224 / JCM 13029 / OCM 148 / SB)).